The primary structure comprises 558 residues: Glucose-6-phosphate isomerase (558 aa).

Glu-362 functions as the Proton donor in the catalytic mechanism. Active-site residues include His-393 and Lys-523.

The protein belongs to the GPI family.

It is found in the cytoplasm. The enzyme catalyses alpha-D-glucose 6-phosphate = beta-D-fructose 6-phosphate. It participates in carbohydrate degradation; glycolysis; D-glyceraldehyde 3-phosphate and glycerone phosphate from D-glucose: step 2/4. This Drosophila yakuba (Fruit fly) protein is Glucose-6-phosphate isomerase (Pgi).